The primary structure comprises 345 residues: D-fructose 1,6-bisphosphatase class 2/sedoheptulose 1,7-bisphosphatase (345 aa).

The Mn(2+) site is built by Asp-33, Glu-57, Asp-97, and Glu-100. Substrate contacts are provided by residues 100 to 102, Tyr-131, 176 to 178, and 198 to 200; these read EGT, RDR, and DGD. Glu-225 lines the Mn(2+) pocket.

This sequence belongs to the FBPase class 2 family. As to quaternary structure, homotetramer. Mn(2+) serves as cofactor.

The enzyme catalyses beta-D-fructose 1,6-bisphosphate + H2O = beta-D-fructose 6-phosphate + phosphate. The catalysed reaction is D-sedoheptulose 1,7-bisphosphate + H2O = D-sedoheptulose 7-phosphate + phosphate. Its pathway is carbohydrate biosynthesis; Calvin cycle. Its function is as follows. Catalyzes the hydrolysis of fructose 1,6-bisphosphate (Fru 1,6-P2) and sedoheptulose 1,7-bisphosphate (Sed 1,7-P2) to fructose 6-phosphate and sedoheptulose 7-phosphate, respectively. The protein is D-fructose 1,6-bisphosphatase class 2/sedoheptulose 1,7-bisphosphatase of Trichormus variabilis (strain ATCC 29413 / PCC 7937) (Anabaena variabilis).